The primary structure comprises 245 residues: Large ribosomal subunit protein uL2 (245 aa).

Residues 198–245 are disordered; the sequence is VSHPHGGGSHKRPGKPTTVARTAPPGQKVGHIAARKTGRAKRRAATKR. Residues 230-245 are compositionally biased toward basic residues; the sequence is AARKTGRAKRRAATKR.

It belongs to the universal ribosomal protein uL2 family. As to quaternary structure, part of the 50S ribosomal subunit. Forms a bridge to the 30S subunit in the 70S ribosome.

One of the primary rRNA binding proteins. Required for association of the 30S and 50S subunits to form the 70S ribosome, for tRNA binding and peptide bond formation. It has been suggested to have peptidyltransferase activity; this is somewhat controversial. Makes several contacts with the 16S rRNA in the 70S ribosome. The sequence is that of Large ribosomal subunit protein uL2 from Korarchaeum cryptofilum (strain OPF8).